Consider the following 493-residue polypeptide: Gamma-aminobutyric acid receptor subunit alpha-3 (493 aa).

Residues 1–28 form the signal peptide; that stretch reads MITTQMWHFYVTRVGLLLLISILPGTTG. The disordered stretch occupies residues 27–54; that stretch reads TGQGESRRQEPGDFVKQDIGGLSPKHAP. The Extracellular portion of the chain corresponds to 29 to 276; that stretch reads QGESRRQEPG…THFHLKRKIG (248 aa). The span at 31-42 shows a compositional bias: basic and acidic residues; that stretch reads ESRRQEPGDFVK. N63 is a glycosylation site (N-linked (GlcNAc...) asparagine). R119 contributes to the 4-aminobutanoate binding site. Residues N163 and N176 are each glycosylated (N-linked (GlcNAc...) asparagine). 4-aminobutanoate is bound at residue T182. C191 and C205 form a disulfide bridge. N228 is a glycosylation site (N-linked (GlcNAc...) asparagine). Transmembrane regions (helical) follow at residues 277–298, 304–325, and 338–359; these read YFVIQTYLPCIMTVILSQVSFW, VPARTVFGVTTVLTMTTLSISA, and MDWFIAVCYAFVFSALIEFATV. At 360 to 458 the chain is on the cytoplasmic side; that stretch reads NYFTKRSWAW…TYNSVSKVDK (99 aa). Position 427 is a phosphoserine (S427). The residue at position 428 (T428) is a Phosphothreonine. Residues S434 and S443 each carry the phosphoserine modification. A helical transmembrane segment spans residues 459-480; the sequence is ISRIIFPVLFAIFNLVYWATYV.

This sequence belongs to the ligand-gated ion channel (TC 1.A.9) family. Gamma-aminobutyric acid receptor (TC 1.A.9.5) subfamily. GABRA3 sub-subfamily. Heteropentamer, formed by a combination of alpha (GABRA1-6), beta (GABRB1-3), gamma (GABRG1-3), delta (GABRD), epsilon (GABRE), rho (GABRR1-3), pi (GABRP) and theta (GABRQ) chains, each subunit exhibiting distinct physiological and pharmacological properties. Binds UBQLN1. Interacts with GPHN. Expressed in most brain regions. Expressed in lungs, in alveolar epithelium.

Its subcellular location is the postsynaptic cell membrane. It is found in the cell membrane. The enzyme catalyses chloride(in) = chloride(out). Functionally, alpha subunit of the heteropentameric ligand-gated chloride channel gated by gamma-aminobutyric acid (GABA), a major inhibitory neurotransmitter in the brain. GABA-gated chloride channels, also named GABA(A) receptors (GABAAR), consist of five subunits arranged around a central pore and contain GABA active binding site(s) located at the alpha and beta subunit interface(s). When activated by GABA, GABAARs selectively allow the flow of chloride anions across the cell membrane down their electrochemical gradient. Chloride influx into the postsynaptic neuron following GABAAR opening decreases the neuron ability to generate a new action potential, thereby reducing nerve transmission. The chain is Gamma-aminobutyric acid receptor subunit alpha-3 from Rattus norvegicus (Rat).